The sequence spans 877 residues: Leucine--tRNA ligase (877 aa).

Residues 48-58 (PYPSGKLHMGH) carry the 'HIGH' region motif. Positions 636–640 (KMSKS) match the 'KMSKS' region motif. Lys-639 provides a ligand contact to ATP.

It belongs to the class-I aminoacyl-tRNA synthetase family.

Its subcellular location is the cytoplasm. It catalyses the reaction tRNA(Leu) + L-leucine + ATP = L-leucyl-tRNA(Leu) + AMP + diphosphate. The sequence is that of Leucine--tRNA ligase from Ralstonia nicotianae (strain ATCC BAA-1114 / GMI1000) (Ralstonia solanacearum).